Consider the following 348-residue polypeptide: Mitogen-activated protein kinase kinase 5 (348 aa).

2 disordered regions span residues 1–26 (MKPI…DLSL) and 35–54 (LAVP…PASS). Ser6 bears the Phosphoserine; by ASK7 mark. In terms of domain architecture, Protein kinase spans 70–325 (LERVNRIGSG…AQQLLQHPFI (256 aa)). Residues 76–84 (IGSGAGGTV) and Lys99 each bind ATP. Asp187 acts as the Proton acceptor in catalysis. Thr215 carries the phosphothreonine modification. Position 221 is a phosphoserine; by ASK7 (Ser221). Position 221 is a phosphoserine (Ser221). Phosphothreonine; by ASK7 is present on Thr225. Position 313 is an ADP-ribosylarginine; by HopF2 (Arg313).

The protein belongs to the protein kinase superfamily. STE Ser/Thr protein kinase family. MAP kinase kinase subfamily. In terms of assembly, interacts with P.syringae type III effector HopF2. Interacts with BZR1. Interacts with MPK6 and MPK3. Interacts with RACK1A, RACK1B and RACK1C. Interacts with MAPKKK5 mainly in the cytosol. Binds to BASL. Interacts with MAPKKK20. In terms of processing, phosphorylation at Thr-215 and Ser-221 by MAP kinase kinase kinases positively regulates kinase activity. Phosphorylated by MAPKKK5 and MAPKKK20 in response to abscisic acid (ABA). ADP-ribosylation at Arg-313 by P.syringae type III effector HopF2 reduces the ability of the protein to phosphorylate downstream MPK6. Expressed higher in stems and leaves than in flowers and roots.

The enzyme catalyses L-seryl-[protein] + ATP = O-phospho-L-seryl-[protein] + ADP + H(+). The catalysed reaction is L-threonyl-[protein] + ATP = O-phospho-L-threonyl-[protein] + ADP + H(+). It carries out the reaction L-tyrosyl-[protein] + ATP = O-phospho-L-tyrosyl-[protein] + ADP + H(+). With respect to regulation, activated through serine and threonine phosphorylation by MEKK1 and MAPKKK20 in response to abscisic acid (ABA). Inhibited through phosphorylation by GSK3/Shaggy-like kinase ASKs. Inhibited through ADP-Ribosylation by P.syringae HopF2. Activated after high light stress. Functionally, mitogen-activated protein kinase kinase (MAPKK) which regulates abscisic acid (ABA) responses in a MAPKKK20-MKK5-MPK6 cascade involved in root growth (e.g. root cell division and elongation) and stomatal response, probably via MAPK6 activation by protein phosphorylation. Involved in the second phase of hydrogen peroxide generation during hypersensitive response-like cell death. Involved in the innate immune MAP kinase signaling cascade (MEKK1, MKK4/MKK5 and MPK3/MPK6) downstream of bacterial flagellin receptor FLS2. Activates by phosphorylation the downstream MPK3 and MPK6. YDA-MKK4/MKK5-MPK3/MPK6 module regulates stomatal cell fate before the guard mother cell (GMC) is specified. This MAPK cascade also functions downstream of the ER receptor in regulating coordinated local cell proliferation, which shapes the morphology of plant organs. MKK4 and MKK5 participate in the regulation of floral organ abscission. Target of the Pseudomonas syringae type III effector HopF2, that inhibits the activation of the downstream MPK6 and PAMP-triggered immunity. Plays a critical role in high light stress tolerance by the mediation of the Cu/Zn SODs CSD1 and CSD2 gene expression. Phosphorylates BZR1 in vitro. The protein is Mitogen-activated protein kinase kinase 5 of Arabidopsis thaliana (Mouse-ear cress).